The sequence spans 253 residues: Rab GTPase-activating protein 1-like, isoform 10 (253 aa).

Positions 8 to 222 (SMTFEERENR…MNEIQAAKNS (215 aa)) form a coiled coil. The tract at residues 233-253 (TATGTQPLQPAPVTQPPKEST) is disordered.

This chain is Rab GTPase-activating protein 1-like, isoform 10 (RABGAP1L), found in Homo sapiens (Human).